The chain runs to 201 residues: 3-isopropylmalate dehydratase small subunit (201 aa).

Belongs to the LeuD family. LeuD type 1 subfamily. As to quaternary structure, heterodimer of LeuC and LeuD.

It carries out the reaction (2R,3S)-3-isopropylmalate = (2S)-2-isopropylmalate. The protein operates within amino-acid biosynthesis; L-leucine biosynthesis; L-leucine from 3-methyl-2-oxobutanoate: step 2/4. Catalyzes the isomerization between 2-isopropylmalate and 3-isopropylmalate, via the formation of 2-isopropylmaleate. The chain is 3-isopropylmalate dehydratase small subunit from Glaesserella parasuis serovar 5 (strain SH0165) (Haemophilus parasuis).